Consider the following 341-residue polypeptide: Uroporphyrinogen decarboxylase (341 aa).

Residues 25 to 29 (RQAGR), phenylalanine 44, aspartate 74, tyrosine 151, serine 206, and histidine 318 each bind substrate.

It belongs to the uroporphyrinogen decarboxylase family. Homodimer.

The protein resides in the cytoplasm. The enzyme catalyses uroporphyrinogen III + 4 H(+) = coproporphyrinogen III + 4 CO2. It functions in the pathway porphyrin-containing compound metabolism; protoporphyrin-IX biosynthesis; coproporphyrinogen-III from 5-aminolevulinate: step 4/4. Functionally, catalyzes the decarboxylation of four acetate groups of uroporphyrinogen-III to yield coproporphyrinogen-III. The sequence is that of Uroporphyrinogen decarboxylase from Flavobacterium johnsoniae (strain ATCC 17061 / DSM 2064 / JCM 8514 / BCRC 14874 / CCUG 350202 / NBRC 14942 / NCIMB 11054 / UW101) (Cytophaga johnsonae).